Consider the following 117-residue polypeptide: Large ribosomal subunit protein uL18 (117 aa).

Belongs to the universal ribosomal protein uL18 family. As to quaternary structure, part of the 50S ribosomal subunit; part of the 5S rRNA/L5/L18/L25 subcomplex. Contacts the 5S and 23S rRNAs.

Its function is as follows. This is one of the proteins that bind and probably mediate the attachment of the 5S RNA into the large ribosomal subunit, where it forms part of the central protuberance. This is Large ribosomal subunit protein uL18 from Glaesserella parasuis serovar 5 (strain SH0165) (Haemophilus parasuis).